The chain runs to 363 residues: tRNA/tmRNA (uracil-C(5))-methyltransferase (363 aa).

Positions 187, 215, 220, 236, and 296 each coordinate S-adenosyl-L-methionine. Cysteine 321 acts as the Nucleophile in catalysis. Residue glutamate 355 is the Proton acceptor of the active site.

Belongs to the class I-like SAM-binding methyltransferase superfamily. RNA M5U methyltransferase family. TrmA subfamily.

It catalyses the reaction uridine(54) in tRNA + S-adenosyl-L-methionine = 5-methyluridine(54) in tRNA + S-adenosyl-L-homocysteine + H(+). The catalysed reaction is uridine(341) in tmRNA + S-adenosyl-L-methionine = 5-methyluridine(341) in tmRNA + S-adenosyl-L-homocysteine + H(+). Dual-specificity methyltransferase that catalyzes the formation of 5-methyluridine at position 54 (m5U54) in all tRNAs, and that of position 341 (m5U341) in tmRNA (transfer-mRNA). This chain is tRNA/tmRNA (uracil-C(5))-methyltransferase, found in Pseudomonas aeruginosa (strain LESB58).